We begin with the raw amino-acid sequence, 750 residues long: Catalase-peroxidase (750 aa).

Residues 112–235 (WHSAGTYRIG…LGAAHMGLIY (124 aa)) constitute a cross-link (tryptophyl-tyrosyl-methioninium (Trp-Tyr) (with M-261)). H113 acts as the Proton acceptor in catalysis. The segment at residues 235–261 (YVNPEGHNGNPDPVEAASYIRETFGRM) is a cross-link (tryptophyl-tyrosyl-methioninium (Tyr-Met) (with W-112)). H276 lines the heme b pocket.

It belongs to the peroxidase family. Peroxidase/catalase subfamily. Homodimer or homotetramer. Heme b serves as cofactor. Post-translationally, formation of the three residue Trp-Tyr-Met cross-link is important for the catalase, but not the peroxidase activity of the enzyme.

It catalyses the reaction H2O2 + AH2 = A + 2 H2O. It carries out the reaction 2 H2O2 = O2 + 2 H2O. Functionally, bifunctional enzyme with both catalase and broad-spectrum peroxidase activity. The polypeptide is Catalase-peroxidase (Christiangramia forsetii (strain DSM 17595 / CGMCC 1.15422 / KT0803) (Gramella forsetii)).